A 241-amino-acid polypeptide reads, in one-letter code: Host range factor p28 (241 aa).

Residues 21-131 (YIDEPNDIRL…QSILRGLVNW (111 aa)) enclose the KilA-N domain. The segment at 172–225 (CGICYEVVYSKRLENDRYFGLLDSCNHIFCITCINIWHRTRRETGASDNCPICR) adopts an RING-type zinc-finger fold.

This sequence belongs to the orthopoxvirus OPG021 family.

Its subcellular location is the host cytoplasm. The catalysed reaction is S-ubiquitinyl-[E2 ubiquitin-conjugating enzyme]-L-cysteine + [acceptor protein]-L-lysine = [E2 ubiquitin-conjugating enzyme]-L-cysteine + N(6)-ubiquitinyl-[acceptor protein]-L-lysine.. Functionally, RING-finger E3 ubiquitin ligase which catalyzes the formation of both 'Lys-48'- and 'Lys-63'-linked polyubiquitin chains. Plays an important role in virulence by acting as an anti-apoptotic factor. The sequence is that of Host range factor p28 (OPG021) from Ectromelia virus (strain Moscow) (ECTV).